A 97-amino-acid polypeptide reads, in one-letter code: Class II hydrophobin 1 (97 aa).

Residues 1 to 16 (MKFFAIAALFAAAAVA) form the signal peptide. Positions 17 to 22 (QPLEDR) are excised as a propeptide. 4 disulfides stabilise this stretch: cysteine 30/cysteine 79, cysteine 40/cysteine 70, cysteine 41/cysteine 53, and cysteine 80/cysteine 91.

Belongs to the cerato-ulmin hydrophobin family. In terms of assembly, homotetramer. Further self-assembles to form highly ordered films at water-air interfaces through intermolecular interactions.

The protein localises to the secreted. The protein resides in the cell wall. Aerial growth, conidiation, and dispersal of filamentous fungi in the environment rely upon a capability of their secreting small amphipathic proteins called hydrophobins (HPBs) with low sequence identity. Class I can self-assemble into an outermost layer of rodlet bundles on aerial cell surfaces, conferring cellular hydrophobicity that supports fungal growth, development and dispersal; whereas Class II form highly ordered films at water-air interfaces through intermolecular interactions but contribute nothing to the rodlet structure. Hbf1 is a class II hydrophobin that has a role in hyphal development and is in particular required for the formation of aerial hyphae. The polypeptide is Class II hydrophobin 1 (Hypocrea jecorina (Trichoderma reesei)).